A 197-amino-acid chain; its full sequence is ATP-dependent Clp protease proteolytic subunit (197 aa).

The active-site Nucleophile is Ser-102. His-127 is an active-site residue.

This sequence belongs to the peptidase S14 family. As to quaternary structure, fourteen ClpP subunits assemble into 2 heptameric rings which stack back to back to give a disk-like structure with a central cavity, resembling the structure of eukaryotic proteasomes.

The protein resides in the cytoplasm. The catalysed reaction is Hydrolysis of proteins to small peptides in the presence of ATP and magnesium. alpha-casein is the usual test substrate. In the absence of ATP, only oligopeptides shorter than five residues are hydrolyzed (such as succinyl-Leu-Tyr-|-NHMec, and Leu-Tyr-Leu-|-Tyr-Trp, in which cleavage of the -Tyr-|-Leu- and -Tyr-|-Trp bonds also occurs).. Functionally, cleaves peptides in various proteins in a process that requires ATP hydrolysis. Has a chymotrypsin-like activity. Plays a major role in the degradation of misfolded proteins. The protein is ATP-dependent Clp protease proteolytic subunit of Borreliella afzelii (strain PKo) (Borrelia afzelii).